Reading from the N-terminus, the 104-residue chain is Growth-regulated protein homolog alpha (104 aa).

A signal peptide spans Met1 to Ala30. Disulfide bonds link Cys40–Cys66 and Cys42–Cys82.

This sequence belongs to the intercrine alpha (chemokine CxC) family.

The protein resides in the secreted. The sequence is that of Growth-regulated protein homolog alpha from Bos taurus (Bovine).